The chain runs to 391 residues: MAIINMSDLDLQGKRVLIREDLNVPVSNGVVTSDARLRASLPTIELALAKGAAVMVMSHLGRPTEGEYNPEYSMQPVVDYLAKALSCPVRLATDYLDGVDVAVGEVVVFENVRFNVGEGKNNEALSKKMAALCDVYVMDAFGTAHRAQASTHGVGMFAPIACAGPLLAQELDALGKALDNPARPMVAIVGGSKVSTKLTVLESLSGIVDQLVVGGGIANTFIAAAGYNVGKSLYEADLIDEAKRLVANAKSRGADIPVPTDVVVAGEFSPTAAATLKSVSEVADGEMIFDIGPDSAEALAKIIESAGTIVWNGPVGVFEFDQFGEGTKRIAQAIADSKAFSIAGGGDTLAAVDKYGIADKVSYISTGGGAFLEFLEGKELPAVAMLEKRGA.

Substrate is bound by residues 21–23 (DLN), R36, 59–62 (HLGR), R113, and R146. ATP contacts are provided by residues K197, E319, and 345–348 (GGDT).

This sequence belongs to the phosphoglycerate kinase family. In terms of assembly, monomer.

The protein localises to the cytoplasm. The enzyme catalyses (2R)-3-phosphoglycerate + ATP = (2R)-3-phospho-glyceroyl phosphate + ADP. It functions in the pathway carbohydrate degradation; glycolysis; pyruvate from D-glyceraldehyde 3-phosphate: step 2/5. This is Phosphoglycerate kinase from Shewanella baltica (strain OS223).